We begin with the raw amino-acid sequence, 189 residues long: Xanthine phosphoribosyltransferase (189 aa).

L20 and N27 together coordinate xanthine. 5-phospho-alpha-D-ribose 1-diphosphate is bound at residue 128–132 (ANGEA). Residue K156 coordinates xanthine.

This sequence belongs to the purine/pyrimidine phosphoribosyltransferase family. Xpt subfamily. Homodimer.

It localises to the cytoplasm. It carries out the reaction XMP + diphosphate = xanthine + 5-phospho-alpha-D-ribose 1-diphosphate. It participates in purine metabolism; XMP biosynthesis via salvage pathway; XMP from xanthine: step 1/1. Its function is as follows. Converts the preformed base xanthine, a product of nucleic acid breakdown, to xanthosine 5'-monophosphate (XMP), so it can be reused for RNA or DNA synthesis. The protein is Xanthine phosphoribosyltransferase of Lactobacillus delbrueckii subsp. bulgaricus (strain ATCC 11842 / DSM 20081 / BCRC 10696 / JCM 1002 / NBRC 13953 / NCIMB 11778 / NCTC 12712 / WDCM 00102 / Lb 14).